An 863-amino-acid polypeptide reads, in one-letter code: Oleate activated transcription factor 3 (863 aa).

Residues 19–47 (CTNCKKRKSKCDRTKPCGTCVRLGDVDSC) constitute a DNA-binding region (zn(2)-C6 fungal-type). Residues 52–63 (DSSGQPESSPSL) show a composition bias toward polar residues. The tract at residues 52–99 (DSSGQPESSPSLNDADPLRKQSTPAERISPGFIKKRRSSQTRQDEDHW) is disordered.

The protein belongs to the OAF3 family.

It is found in the cytoplasm. The protein localises to the nucleus. The protein resides in the mitochondrion. Its function is as follows. Transcriptional inhibitor with a significantly increased number of target genes in response to oleate. This chain is Oleate activated transcription factor 3 (OAF3), found in Saccharomyces cerevisiae (strain YJM789) (Baker's yeast).